The chain runs to 184 residues: Ribosome-recycling factor (184 aa).

This sequence belongs to the RRF family.

It is found in the cytoplasm. In terms of biological role, responsible for the release of ribosomes from messenger RNA at the termination of protein biosynthesis. May increase the efficiency of translation by recycling ribosomes from one round of translation to another. The polypeptide is Ribosome-recycling factor (Fervidobacterium nodosum (strain ATCC 35602 / DSM 5306 / Rt17-B1)).